The primary structure comprises 501 residues: Sucrose transport protein SUT2 (501 aa).

The Cytoplasmic segment spans residues 1–31; that stretch reads MPRRPSGGGGGAGPAAAAVRKVPLRKLLRAA. The chain crosses the membrane as a helical span at residues 32 to 52; it reads SVACGVQFGWALQLSLLTPYV. Over 53–55 the chain is Extracellular; sequence QEL. The chain crosses the membrane as a helical span at residues 56–76; it reads GIPHAFASLVWLCGPLSGLLV. Residues 77–98 are Cytoplasmic-facing; sequence QPLVGHLSDRIAPAASPLGRRR. Residues 99–119 form a helical membrane-spanning segment; the sequence is PFIAAGAASIAAAVLTVGFSA. At 120–135 the chain is on the extracellular side; sequence DLGRIFGDSITPGSTR. A helical transmembrane segment spans residues 136–156; it reads LGAIIVYLVGFWLLDVGNNAT. At 157–176 the chain is on the cytoplasmic side; it reads QGPCRAFLADLTENDPRRTR. A helical transmembrane segment spans residues 177 to 197; it reads IANAYFSLFMALGNILGYATG. Residues 198 to 222 lie on the Extracellular side of the membrane; it reads AYSGWYKIFPFTVTPSCSISCANLK. The helical transmembrane segment at 223–243 threads the bilayer; that stretch reads SAFLLDIIILVVTTCITVASV. At 244–278 the chain is on the cytoplasmic side; the sequence is QEPQSLGSDEADHPSTEQEAFLWELFGSFRYFTLP. The chain crosses the membrane as a helical span at residues 279 to 299; that stretch reads VWMVLIVTALTWIGWFPFILF. At 300–327 the chain is on the extracellular side; it reads DTDWMGREIYRGSPDDPSITQSYHDGVR. The helical transmembrane segment at 328 to 348 threads the bilayer; that stretch reads MGSFGLMLNSVLLGFTSIVLE. The Cytoplasmic portion of the chain corresponds to 349–356; it reads KLCRKWGA. A helical membrane pass occupies residues 357–377; the sequence is GLVWGVSNILMALCFVAMLVI. Residues 378–394 are Extracellular-facing; sequence TYVAKNMDYPPSGVPPT. Residues 395–415 form a helical membrane-spanning segment; sequence GIVIASLVVFTILGAPLAITY. The Cytoplasmic segment spans residues 416–433; the sequence is SIPYAMAASRVENLGLGQ. Residues 434-454 traverse the membrane as a helical segment; it reads GLAMGILNLAIVIPQVIVSLG. The Extracellular portion of the chain corresponds to 455-467; sequence SGPWDQLFGGGNA. Residues 468–488 traverse the membrane as a helical segment; sequence PAFAVAAAASFIGGLVAILGL. At 489–501 the chain is on the cytoplasmic side; sequence PRARIASRRRGHR.

It belongs to the glycoside-pentoside-hexuronide (GPH) cation symporter transporter (TC 2.A.2.4) family. As to quaternary structure, homodimer. Expressed in source leaf blades.

The protein resides in the cell membrane. The protein operates within glycan biosynthesis; sucrose metabolism. Its function is as follows. Responsible for the transport of sucrose into the cell, with the concomitant uptake of protons (symport system). May also transport other glucosides. The chain is Sucrose transport protein SUT2 (SUT2) from Oryza sativa subsp. indica (Rice).